We begin with the raw amino-acid sequence, 1262 residues long: Isoleucine--tRNA ligase, cytoplasmic (1262 aa).

At Met1 the chain carries N-acetylmethionine. Positions 48–58 (PFATGLPHYGH) match the 'HIGH' region motif. Residues 600–604 (KMSKR) carry the 'KMSKS' region motif. Lys603 lines the ATP pocket. Ser1049 is subject to Phosphoserine. The residue at position 1058 (Thr1058) is a Phosphothreonine.

This sequence belongs to the class-I aminoacyl-tRNA synthetase family. As to quaternary structure, part of a multisubunit complex that groups tRNA ligases for Arg (RARS1), Asp (DARS1), Gln (QARS1), Ile (IARS1), Leu (LARS1), Lys (KARS1), Met (MARS1) the bifunctional ligase for Glu and Pro (EPRS1) and the auxiliary subunits AIMP1/p43, AIMP2/p38 and EEF1E1/p18.

It is found in the cytoplasm. The protein localises to the cytosol. The enzyme catalyses tRNA(Ile) + L-isoleucine + ATP = L-isoleucyl-tRNA(Ile) + AMP + diphosphate. Its function is as follows. Catalyzes the specific attachment of an amino acid to its cognate tRNA in a 2 step reaction: the amino acid (AA) is first activated by ATP to form AA-AMP and then transferred to the acceptor end of the tRNA. The protein is Isoleucine--tRNA ligase, cytoplasmic (Iars1) of Mus musculus (Mouse).